A 356-amino-acid chain; its full sequence is Dihydroorotate dehydrogenase (quinone) (356 aa).

FMN-binding positions include 60–64 (AGFDK) and serine 84. Lysine 64 is a substrate binding site. 109–113 (NRFGF) contributes to the substrate binding site. 2 residues coordinate FMN: asparagine 140 and asparagine 171. Substrate is bound at residue asparagine 171. Serine 174 acts as the Nucleophile in catalysis. Residue asparagine 176 coordinates substrate. Positions 216 and 244 each coordinate FMN. Residue 245–246 (NT) coordinates substrate. Residues glycine 267, glycine 296, and 317-318 (YS) contribute to the FMN site.

Belongs to the dihydroorotate dehydrogenase family. Type 2 subfamily. Monomer. FMN serves as cofactor.

Its subcellular location is the cell membrane. The enzyme catalyses (S)-dihydroorotate + a quinone = orotate + a quinol. It functions in the pathway pyrimidine metabolism; UMP biosynthesis via de novo pathway; orotate from (S)-dihydroorotate (quinone route): step 1/1. Its function is as follows. Catalyzes the conversion of dihydroorotate to orotate with quinone as electron acceptor. This Azorhizobium caulinodans (strain ATCC 43989 / DSM 5975 / JCM 20966 / LMG 6465 / NBRC 14845 / NCIMB 13405 / ORS 571) protein is Dihydroorotate dehydrogenase (quinone).